A 131-amino-acid chain; its full sequence is Monothiol glutaredoxin-S6 (131 aa).

Residues 31–131 (SAFVQNAIYS…KLLGNSQSQR (101 aa)) enclose the Glutaredoxin domain. Cys51 lines the [2Fe-2S] cluster pocket.

The protein belongs to the glutaredoxin family. CPYC subfamily.

It localises to the cytoplasm. Its function is as follows. May only reduce GSH-thiol disulfides, but not protein disulfides. The chain is Monothiol glutaredoxin-S6 (GRXS6) from Oryza sativa subsp. japonica (Rice).